Here is a 523-residue protein sequence, read N- to C-terminus: Acetyl-CoA hydrolase (523 aa).

Residue 277–281 (GIGNI) coordinates CoA. The active-site 5-glutamyl coenzyme A thioester intermediate is the glutamate 302. CoA contacts are provided by asparagine 392 and glycine 396.

It belongs to the acetyl-CoA hydrolase/transferase family.

It localises to the cytoplasm. It carries out the reaction acetyl-CoA + H2O = acetate + CoA + H(+). Functionally, presumably involved in regulating the intracellular acetyl-CoA pool for fatty acid and cholesterol synthesis and fatty acid oxidation. The protein is Acetyl-CoA hydrolase (ACH1) of Kluyveromyces lactis (strain ATCC 8585 / CBS 2359 / DSM 70799 / NBRC 1267 / NRRL Y-1140 / WM37) (Yeast).